Consider the following 250-residue polypeptide: PF03932 family protein CutC (250 aa).

This sequence belongs to the CutC family.

The protein localises to the cytoplasm. This is PF03932 family protein CutC from Proteus mirabilis (strain HI4320).